Reading from the N-terminus, the 193-residue chain is Ribosomal RNA large subunit methyltransferase E (193 aa).

S-adenosyl-L-methionine-binding residues include Gly51, Trp53, Asp69, Asp85, and Asp108. Catalysis depends on Lys148, which acts as the Proton acceptor.

The protein belongs to the class I-like SAM-binding methyltransferase superfamily. RNA methyltransferase RlmE family.

It localises to the cytoplasm. It carries out the reaction uridine(2552) in 23S rRNA + S-adenosyl-L-methionine = 2'-O-methyluridine(2552) in 23S rRNA + S-adenosyl-L-homocysteine + H(+). In terms of biological role, specifically methylates the uridine in position 2552 of 23S rRNA at the 2'-O position of the ribose in the fully assembled 50S ribosomal subunit. The chain is Ribosomal RNA large subunit methyltransferase E from Methanoregula boonei (strain DSM 21154 / JCM 14090 / 6A8).